The chain runs to 1057 residues: Histone deacetylase complex subunit SAP130 (1057 aa).

The segment at 1-69 is disordered; it reads MSSQQFPRLG…LPPREEKQEP (69 aa). The span at 14-28 shows a compositional bias: polar residues; sequence PGLSQPPSQIASSGS. Residues 41-54 are compositionally biased toward basic and acidic residues; it reads EAGRDADVGTREHV. Arginine 206 bears the Omega-N-methylarginine mark. At threonine 329 the chain carries Phosphothreonine. Phosphoserine occurs at positions 416 and 439. Disordered stretches follow at residues 619-695 and 718-740; these read TTVV…KSEV and PTVA…IAAA. Positions 620 to 641 are enriched in polar residues; the sequence is TVVQTHSQSASTNTPAQGSSPR. Residue lysine 794 forms a Glycyl lysine isopeptide (Lys-Gly) (interchain with G-Cter in SUMO2) linkage. The tract at residues 827–873 is disordered; sequence NLSMPPSDLPPGASPRKKPRKQQHVISTEEGDMMETNSTDDEKSAAK. Residues 845–1057 are interactions with SIN3A and HDAC1; it reads PRKQQHVIST…VSKLKRKEKV (213 aa). Serine 864 carries the phosphoserine modification. At threonine 865 the chain carries Phosphothreonine. Residues lysine 873 and lysine 878 each participate in a glycyl lysine isopeptide (Lys-Gly) (interchain with G-Cter in SUMO2) cross-link. Serine 884 is subject to Phosphoserine.

This sequence belongs to the SAP130 family. Component of a mSin3A corepressor complex that contains SIN3A, SAP130, SUDS3/SAP45, ARID4B/SAP180, HDAC1 and HDAC2. Interacts (released by dead or dying cells) with CLEC4E. Acetylated. Post-translationally, sumoylated with SUMO1.

It localises to the nucleus. Acts as a transcriptional repressor. May function in the assembly and/or enzymatic activity of the mSin3A corepressor complex or in mediating interactions between the complex and other regulatory complexes. The sequence is that of Histone deacetylase complex subunit SAP130 (Sap130) from Mus musculus (Mouse).